The chain runs to 245 residues: Haloacid dehalogenase-like hydrolase domain-containing protein At2g33255 (245 aa).

T2 is subject to N-acetylalanine. Residue D39 is the Nucleophile of the active site. The Mg(2+) site is built by D39, D41, and D186. The active-site Proton donor is D41.

It belongs to the HAD-like hydrolase superfamily. DOG/GPP family. It depends on Mg(2+) as a cofactor.

The protein is Haloacid dehalogenase-like hydrolase domain-containing protein At2g33255 of Arabidopsis thaliana (Mouse-ear cress).